Consider the following 153-residue polypeptide: SsrA-binding protein (153 aa).

Belongs to the SmpB family.

It is found in the cytoplasm. Required for rescue of stalled ribosomes mediated by trans-translation. Binds to transfer-messenger RNA (tmRNA), required for stable association of tmRNA with ribosomes. tmRNA and SmpB together mimic tRNA shape, replacing the anticodon stem-loop with SmpB. tmRNA is encoded by the ssrA gene; the 2 termini fold to resemble tRNA(Ala) and it encodes a 'tag peptide', a short internal open reading frame. During trans-translation Ala-aminoacylated tmRNA acts like a tRNA, entering the A-site of stalled ribosomes, displacing the stalled mRNA. The ribosome then switches to translate the ORF on the tmRNA; the nascent peptide is terminated with the 'tag peptide' encoded by the tmRNA and targeted for degradation. The ribosome is freed to recommence translation, which seems to be the essential function of trans-translation. The chain is SsrA-binding protein from Orientia tsutsugamushi (strain Ikeda) (Rickettsia tsutsugamushi).